The chain runs to 312 residues: Apolipoprotein E (312 aa).

The signal sequence occupies residues 1–18; that stretch reads MKALWALLLVPLLTGCLA. 8 tandem repeats follow at residues 72-93, 94-115, 116-137, 138-159, 160-181, 182-203, 204-225, and 226-247. Positions 72–247 are 8 X 22 AA approximate tandem repeats; it reads VLMEDTMTEV…RLEEVREQME (176 aa). Met-135 bears the Methionine sulfoxide mark. At Ser-139 the chain carries Phosphoserine. The LDL and other lipoprotein receptors binding stretch occupies residues 150–160; the sequence is HLRKMRKRLMR. The tract at residues 150–160 is LDL receptor binding; it reads HLRKMRKRLMR. A heparin-binding site is contributed by 154 to 157; sequence MRKR. A lipid-binding and lipoprotein association region spans residues 202 to 282; it reads TANLGAGAAQ…GWFEPLVEDM (81 aa). Heparin is bound at residue 221–228; that stretch reads SDRIRGRL. Residues 258–312 form a homooligomerization region; the sequence is QQIRLQAEIFQARIKGWFEPLVEDMQRQWANLMEKIQASVATNSIASTTVPLENQ. Residues 270 to 282 form a specificity for association with VLDL region; that stretch reads RIKGWFEPLVEDM.

The protein belongs to the apolipoprotein A1/A4/E family. As to quaternary structure, homotetramer. May interact with ABCA1; functionally associated with ABCA1 in the biogenesis of HDLs. May interact with APP/A4 amyloid-beta peptide; the interaction is extremely stable in vitro but its physiological significance is unclear. May interact with MAPT. May interact with MAP2. In the cerebrospinal fluid, interacts with secreted SORL1. Interacts with PMEL; this allows the loading of PMEL luminal fragment on ILVs to induce fibril nucleation. Post-translationally, APOE exists as multiple glycosylated and sialylated glycoforms within cells and in plasma. The extent of glycosylation and sialylation are tissue and context specific. Glycated in plasma VLDL. In terms of processing, phosphorylated by FAM20C in the extracellular medium.

The protein localises to the secreted. It is found in the extracellular space. Its subcellular location is the extracellular matrix. The protein resides in the extracellular vesicle. It localises to the endosome. The protein localises to the multivesicular body. Functionally, APOE is an apolipoprotein, a protein associating with lipid particles, that mainly functions in lipoprotein-mediated lipid transport between organs via the plasma and interstitial fluids. APOE is a core component of plasma lipoproteins and is involved in their production, conversion and clearance. Apolipoproteins are amphipathic molecules that interact both with lipids of the lipoprotein particle core and the aqueous environment of the plasma. As such, APOE associates with chylomicrons, chylomicron remnants, very low density lipoproteins (VLDL) and intermediate density lipoproteins (IDL) but shows a preferential binding to high-density lipoproteins (HDL). It also binds a wide range of cellular receptors including the LDL receptor/LDLR and the very low-density lipoprotein receptor/VLDLR that mediate the cellular uptake of the APOE-containing lipoprotein particles. Finally, APOE also has a heparin-binding activity and binds heparan-sulfate proteoglycans on the surface of cells, a property that supports the capture and the receptor-mediated uptake of APOE-containing lipoproteins by cells. The polypeptide is Apolipoprotein E (Apoe) (Rattus norvegicus (Rat)).